Here is a 315-residue protein sequence, read N- to C-terminus: Protease HtpX homolog (315 aa).

A helical membrane pass occupies residues 16-36 (LFMGIGYLIGGASGALIALVV). H130 contacts Zn(2+). E131 is an active-site residue. A Zn(2+)-binding site is contributed by H134. 2 consecutive transmembrane segments (helical) span residues 145–165 (ITAT…FFGG) and 172–192 (GPGL…AMLV). E201 is a binding site for Zn(2+). A disordered region spans residues 282–315 (GGGGASIGRPAGPSPRGAPRSPWSGQPRARGPWG). Residues 288–303 (IGRPAGPSPRGAPRSP) are compositionally biased toward low complexity.

This sequence belongs to the peptidase M48B family. The cofactor is Zn(2+).

It is found in the cell inner membrane. The sequence is that of Protease HtpX homolog from Rhodopseudomonas palustris (strain BisB5).